A 114-amino-acid polypeptide reads, in one-letter code: MSLWLLLLACLLTCLGQVAQKCAVENWRGADLSWSRKWRSPWLWLALFALGSGLLVWLLVLQRLPVSVAYPMLSLNFVIITLIARFVFKEPVDVQHWFGVLLVIGGVALLGQQS.

Residues arginine 39–glutamine 112 form the EamA domain. Helical transmembrane passes span proline 41–leucine 61, leucine 64–alanine 84, and proline 91–glycine 111.

It belongs to the ArnE family. As to quaternary structure, heterodimer of ArnE and ArnF.

Its subcellular location is the cell inner membrane. The protein operates within bacterial outer membrane biogenesis; lipopolysaccharide biosynthesis. Translocates 4-amino-4-deoxy-L-arabinose-phosphoundecaprenol (alpha-L-Ara4N-phosphoundecaprenol) from the cytoplasmic to the periplasmic side of the inner membrane. This is Probable 4-amino-4-deoxy-L-arabinose-phosphoundecaprenol flippase subunit ArnE from Pseudomonas fluorescens (strain Pf0-1).